A 361-amino-acid chain; its full sequence is Nicotinate-nucleotide--dimethylbenzimidazole phosphoribosyltransferase (361 aa).

Glu314 serves as the catalytic Proton acceptor.

The protein belongs to the CobT family.

It carries out the reaction 5,6-dimethylbenzimidazole + nicotinate beta-D-ribonucleotide = alpha-ribazole 5'-phosphate + nicotinate + H(+). Its pathway is nucleoside biosynthesis; alpha-ribazole biosynthesis; alpha-ribazole from 5,6-dimethylbenzimidazole: step 1/2. In terms of biological role, catalyzes the synthesis of alpha-ribazole-5'-phosphate from nicotinate mononucleotide (NAMN) and 5,6-dimethylbenzimidazole (DMB). This chain is Nicotinate-nucleotide--dimethylbenzimidazole phosphoribosyltransferase, found in Mycobacterium bovis (strain BCG / Pasteur 1173P2).